Here is a 572-residue protein sequence, read N- to C-terminus: Proline--tRNA ligase (572 aa).

Belongs to the class-II aminoacyl-tRNA synthetase family. ProS type 1 subfamily. As to quaternary structure, homodimer.

It is found in the cytoplasm. It catalyses the reaction tRNA(Pro) + L-proline + ATP = L-prolyl-tRNA(Pro) + AMP + diphosphate. Its function is as follows. Catalyzes the attachment of proline to tRNA(Pro) in a two-step reaction: proline is first activated by ATP to form Pro-AMP and then transferred to the acceptor end of tRNA(Pro). As ProRS can inadvertently accommodate and process non-cognate amino acids such as alanine and cysteine, to avoid such errors it has two additional distinct editing activities against alanine. One activity is designated as 'pretransfer' editing and involves the tRNA(Pro)-independent hydrolysis of activated Ala-AMP. The other activity is designated 'posttransfer' editing and involves deacylation of mischarged Ala-tRNA(Pro). The misacylated Cys-tRNA(Pro) is not edited by ProRS. The sequence is that of Proline--tRNA ligase from Alteromonas mediterranea (strain DSM 17117 / CIP 110805 / LMG 28347 / Deep ecotype).